The chain runs to 95 residues: PqqA binding protein (95 aa).

The protein belongs to the PqqD family. In terms of assembly, monomer. Interacts with PqqE.

It participates in cofactor biosynthesis; pyrroloquinoline quinone biosynthesis. Its function is as follows. Functions as a PqqA binding protein and presents PqqA to PqqE, in the pyrroloquinoline quinone (PQQ) biosynthetic pathway. The polypeptide is PqqA binding protein (Rahnella aquatilis).